A 459-amino-acid polypeptide reads, in one-letter code: Cysteine--tRNA ligase (459 aa).

Cys29 contacts Zn(2+). Positions 31-41 (PTVYDRAHIGN) match the 'HIGH' region motif. The Zn(2+) site is built by Cys209, His234, and Glu238. The 'KMSKS' region motif lies at 267–271 (KMSKS). Residue Lys270 participates in ATP binding.

Belongs to the class-I aminoacyl-tRNA synthetase family. Monomer. Zn(2+) serves as cofactor.

Its subcellular location is the cytoplasm. It carries out the reaction tRNA(Cys) + L-cysteine + ATP = L-cysteinyl-tRNA(Cys) + AMP + diphosphate. In Rhodospirillum rubrum (strain ATCC 11170 / ATH 1.1.1 / DSM 467 / LMG 4362 / NCIMB 8255 / S1), this protein is Cysteine--tRNA ligase.